Here is a 236-residue protein sequence, read N- to C-terminus: Adenosine 5'-phosphosulfate reductase 2 (236 aa).

Cys-122, Cys-123, Cys-205, and Cys-208 together coordinate [4Fe-4S] cluster. Residues 216 to 236 (NDERAGRWAGREKTECGLHQE) form a disordered region. Catalysis depends on Cys-231, which acts as the Nucleophile; cysteine thiosulfonate intermediate.

The protein belongs to the PAPS reductase family. CysH subfamily. [4Fe-4S] cluster serves as cofactor.

It is found in the cytoplasm. The catalysed reaction is [thioredoxin]-disulfide + sulfite + AMP + 2 H(+) = adenosine 5'-phosphosulfate + [thioredoxin]-dithiol. It functions in the pathway sulfur metabolism; hydrogen sulfide biosynthesis; sulfite from sulfate. Its function is as follows. Catalyzes the formation of sulfite from adenosine 5'-phosphosulfate (APS) using thioredoxin as an electron donor. The sequence is that of Adenosine 5'-phosphosulfate reductase 2 from Bacillus subtilis (strain 168).